The primary structure comprises 182 residues: MSESTTGPCHDSLKAYVREIPDYPKPGILFYDITTLIKEPVGLARTIDGITEHFLNKNIDLVVGMEARGFIFGPAVAYRLNAGFIPIRKPRKLPGETVKHTYKLEYGEDTLEIHKDAIQKAQRVLVVDDLLATGGTAVAATELVKQLGGEICGIAFVIELDFLNGRERLKDYDVYSLLHYDK.

It belongs to the purine/pyrimidine phosphoribosyltransferase family. In terms of assembly, homodimer.

The protein localises to the cytoplasm. The catalysed reaction is AMP + diphosphate = 5-phospho-alpha-D-ribose 1-diphosphate + adenine. It functions in the pathway purine metabolism; AMP biosynthesis via salvage pathway; AMP from adenine: step 1/1. Catalyzes a salvage reaction resulting in the formation of AMP, that is energically less costly than de novo synthesis. In Koribacter versatilis (strain Ellin345), this protein is Adenine phosphoribosyltransferase.